The sequence spans 511 residues: Glucans biosynthesis protein G (511 aa).

The first 22 residues, methionine 1 to alanine 22, serve as a signal peptide directing secretion.

It belongs to the OpgD/OpgG family.

It is found in the periplasm. Its pathway is glycan metabolism; osmoregulated periplasmic glucan (OPG) biosynthesis. In terms of biological role, involved in the biosynthesis of osmoregulated periplasmic glucans (OPGs). The protein is Glucans biosynthesis protein G of Escherichia coli O8 (strain IAI1).